The sequence spans 181 residues: UPF0316 protein Bcer98_2136 (181 aa).

The next 3 helical transmembrane spans lie at 6 to 26 (LIFV…ILLV), 32 to 52 (SAAG…GIVF), and 58 to 78 (WMNI…GGYI).

The protein belongs to the UPF0316 family.

It localises to the cell membrane. This is UPF0316 protein Bcer98_2136 from Bacillus cytotoxicus (strain DSM 22905 / CIP 110041 / 391-98 / NVH 391-98).